Here is a 261-residue protein sequence, read N- to C-terminus: MGEIKVSPDYNWFRSTVPLKKIIVDDDDSKIWSLYDAGPRSIRCPLIFLPPVSGTADVFFQQILALTGWGYRVIALQYPVYWDHLEFCDGFRKLLDHLQLDKVHLFGASLGGFLAQKFAEYTHKSPRVHSLILCNAFSDTSIFNQTWTANSFWLMPAFMLKKIVLGNFSSGPVDPMMADAIDFMVDRLESLGQSELASRLTLNCQNSYVEPHKIRDIPVTIMDIHLLQFHGTKYAAIDPSVVSAEELDVQKGQLDLSQEEP.

One can recognise an AB hydrolase-1 domain in the interval 87-159; that stretch reads FCDGFRKLLD…NSFWLMPAFM (73 aa). Ser257 carries the post-translational modification Phosphoserine.

Belongs to the AB hydrolase superfamily. Interacts with CD4. Interacts with ALDH16A1.

It localises to the cytoplasm. Its function is as follows. May play a role as a negative regulatory factor in CD4-dependent T-cell activation. In Rattus norvegicus (Rat), this protein is Maspardin (Spg21).